The primary structure comprises 274 residues: Rhamnulose-1-phosphate aldolase (274 aa).

Glu117 is an active-site residue. Zn(2+)-binding residues include His141, His143, and His212.

This sequence belongs to the aldolase class II family. RhaD subfamily. As to quaternary structure, homotetramer. It depends on Zn(2+) as a cofactor.

The protein localises to the cytoplasm. It catalyses the reaction L-rhamnulose 1-phosphate = (S)-lactaldehyde + dihydroxyacetone phosphate. It functions in the pathway carbohydrate degradation; L-rhamnose degradation; glycerone phosphate from L-rhamnose: step 3/3. In terms of biological role, catalyzes the reversible cleavage of L-rhamnulose-1-phosphate to dihydroxyacetone phosphate (DHAP) and L-lactaldehyde. The protein is Rhamnulose-1-phosphate aldolase of Shigella dysenteriae serotype 1 (strain Sd197).